The sequence spans 95 residues: Late cornified envelope protein 7A (95 aa).

This sequence belongs to the LCE family.

In terms of biological role, precursors of the cornified envelope of the stratum corneum. This Homo sapiens (Human) protein is Late cornified envelope protein 7A.